The sequence spans 634 residues: Putative peptidoglycan O-acetyltransferase YrhL (634 aa).

Helical transmembrane passes span 10–30, 38–58, 79–99, 110–130, 145–165, 172–192, 244–264, 270–290, 307–327, 329–349, and 385–405; these read YIPG…TYHL, GFIG…SILL, RLLP…VLFD, AISS…LSYF, LAIE…GMYI, LAAV…VLYE, FLAF…EPFL, LFIS…SSFL, YGIY…QEIG, PVFW…ELSY, and MSIG…SGLA. The segment at 413-481 is disordered; that stretch reads KWTYSSQETN…SQQLKKPADT (69 aa). Over residues 414-429 the composition is skewed to polar residues; it reads WTYSSQETNADTSQAS. Basic and acidic residues-rich tracts occupy residues 430 to 447 and 455 to 470; these read GDKK…EQKT and KENK…KKDT.

It belongs to the acyltransferase 3 family.

It is found in the cell membrane. The protein is Putative peptidoglycan O-acetyltransferase YrhL (yrhL) of Bacillus subtilis (strain 168).